The following is a 778-amino-acid chain: NAD-dependent deacetylase sir2B (778 aa).

ANK repeat units follow at residues L83–I112, R114–G142, D148–S178, H191–S221, D225–N255, Y260–I289, D317–G354, G358–I390, and Y394–S423. The tract at residues S438 to S458 is disordered. The region spanning K465–F778 is the Deacetylase sirtuin-type domain. H608 acts as the Proton acceptor in catalysis. Zn(2+)-binding residues include C616, C619, C642, and C647. Positions K727–N746 are disordered. The segment covering E733 to N746 has biased composition (low complexity).

This sequence belongs to the sirtuin family. The cofactor is Zn(2+).

The catalysed reaction is N(6)-acetyl-L-lysyl-[protein] + NAD(+) + H2O = 2''-O-acetyl-ADP-D-ribose + nicotinamide + L-lysyl-[protein]. In terms of biological role, NAD-dependent deacetylase, which plays an important role in the regulation of transcriptional repression. This is NAD-dependent deacetylase sir2B (sir2B) from Dictyostelium discoideum (Social amoeba).